The following is a 122-amino-acid chain: MTDKQETTQPAEKLQQPEKVAENVDPSLELNKTKVNFTPEKTDVNTYKFYPDDPESTLNRYRFAVKGASEYYDPCQESSKMSFKCLELNNYDRDLCHDYFDAYRECKKQWLKARREKREFWE.

The tract at residues 1–26 (MTDKQETTQPAEKLQQPEKVAENVDP) is disordered. A CHCH domain is found at 72-114 (YDPCQESSKMSFKCLELNNYDRDLCHDYFDAYRECKKQWLKAR). 2 consecutive short sequence motifs (cx9C motif) follow at residues 75–85 (CQESSKMSFKC) and 96–106 (CHDYFDAYREC). 2 cysteine pairs are disulfide-bonded: cysteine 75/cysteine 106 and cysteine 85/cysteine 96.

It belongs to the COX23 family.

Its subcellular location is the mitochondrion intermembrane space. Required for the assembly of cytochrome c oxidase. This is Cytochrome c oxidase-assembly factor COX23, mitochondrial (COX23) from Kluyveromyces lactis (strain ATCC 8585 / CBS 2359 / DSM 70799 / NBRC 1267 / NRRL Y-1140 / WM37) (Yeast).